We begin with the raw amino-acid sequence, 402 residues long: S-adenosylmethionine synthase (402 aa).

Residue histidine 17 participates in ATP binding. Aspartate 19 serves as a coordination point for Mg(2+). Glutamate 45 provides a ligand contact to K(+). 2 residues coordinate L-methionine: glutamate 58 and glutamine 101. The segment at glutamine 101 to glutamate 111 is flexible loop. ATP contacts are provided by residues aspartate 177–lysine 179, arginine 244–phenylalanine 245, aspartate 253, arginine 259–lysine 260, alanine 276, and lysine 280. Aspartate 253 contacts L-methionine. L-methionine is bound at residue lysine 284.

It belongs to the AdoMet synthase family. As to quaternary structure, homotetramer; dimer of dimers. It depends on Mg(2+) as a cofactor. Requires K(+) as cofactor.

It localises to the cytoplasm. The catalysed reaction is L-methionine + ATP + H2O = S-adenosyl-L-methionine + phosphate + diphosphate. It functions in the pathway amino-acid biosynthesis; S-adenosyl-L-methionine biosynthesis; S-adenosyl-L-methionine from L-methionine: step 1/1. In terms of biological role, catalyzes the formation of S-adenosylmethionine (AdoMet) from methionine and ATP. The overall synthetic reaction is composed of two sequential steps, AdoMet formation and the subsequent tripolyphosphate hydrolysis which occurs prior to release of AdoMet from the enzyme. In Lactobacillus johnsonii (strain CNCM I-12250 / La1 / NCC 533), this protein is S-adenosylmethionine synthase.